We begin with the raw amino-acid sequence, 333 residues long: MNEKHLTYADSGVDIEKEESTIKALTNGMTYKREGIGAPLTSIGHYAGLIDFGEYALAMATDGVGSKVLIANEMKRWNTVGIDCIAMNVNDLLAIGAEPISFVDYLALEKHSDDFASQIGEGLVKGAEISRMSIVGGETATLPEIVNGFDLAGTCLGMVKKEEVITGEKVRLGDVLVGIPSNGVHSNGYTLVRDIIKESGHSYHEDFSYNTETTIGDELLIPTRIYMEVLDVIKECDVHGLAHITGSGLLKLKRVTGLGFDFTDPIEPGNIFKFLQEEGNVDDLEMYRTFNMGMGFLIILPEADAEKAAEMTGGKIVGKIVESGIRVRDLEIV.

It belongs to the AIR synthase family.

The protein localises to the cytoplasm. The catalysed reaction is 2-formamido-N(1)-(5-O-phospho-beta-D-ribosyl)acetamidine + ATP = 5-amino-1-(5-phospho-beta-D-ribosyl)imidazole + ADP + phosphate + H(+). The protein operates within purine metabolism; IMP biosynthesis via de novo pathway; 5-amino-1-(5-phospho-D-ribosyl)imidazole from N(2)-formyl-N(1)-(5-phospho-D-ribosyl)glycinamide: step 2/2. The protein is Phosphoribosylformylglycinamidine cyclo-ligase of Methanococcoides burtonii (strain DSM 6242 / NBRC 107633 / OCM 468 / ACE-M).